Here is a 776-residue protein sequence, read N- to C-terminus: Endonuclease MutS2 (776 aa).

Gly-330–Thr-337 is a binding site for ATP. Residues Leu-701–Lys-776 enclose the Smr domain.

The protein belongs to the DNA mismatch repair MutS family. MutS2 subfamily. Homodimer. Binds to stalled ribosomes, contacting rRNA.

Endonuclease that is involved in the suppression of homologous recombination and thus may have a key role in the control of bacterial genetic diversity. In terms of biological role, acts as a ribosome collision sensor, splitting the ribosome into its 2 subunits. Detects stalled/collided 70S ribosomes which it binds and splits by an ATP-hydrolysis driven conformational change. Acts upstream of the ribosome quality control system (RQC), a ribosome-associated complex that mediates the extraction of incompletely synthesized nascent chains from stalled ribosomes and their subsequent degradation. Probably generates substrates for RQC. This is Endonuclease MutS2 from Lactococcus lactis subsp. cremoris (strain SK11).